A 365-amino-acid chain; its full sequence is Probable 7-methylxanthine methyltransferase 4 (365 aa).

S-adenosyl-L-homocysteine is bound at residue Tyr18. Position 25 (Thr25) interacts with theobromine. 6 residues coordinate S-adenosyl-L-homocysteine: Cys62, Gln67, Asp99, Leu100, Ser132, and Phe133. Positions 150, 153, and 154 each coordinate theobromine. Asn170, Asp256, Phe258, and Asn259 together coordinate Mg(2+). Position 311 (Phe311) interacts with theobromine.

The protein belongs to the methyltransferase superfamily. Type-7 methyltransferase family. Mg(2+) is required as a cofactor.

It catalyses the reaction 7-methylxanthine + S-adenosyl-L-methionine = theobromine + S-adenosyl-L-homocysteine + H(+). Its pathway is alkaloid biosynthesis. Involved in the biosynthesis of theobromine. This chain is Probable 7-methylxanthine methyltransferase 4, found in Theobroma cacao (Cacao).